The chain runs to 131 residues: NADPH-dependent 7-cyano-7-deazaguanine reductase (131 aa).

The active-site Thioimide intermediate is the Cys-48. Asp-55 functions as the Proton donor in the catalytic mechanism. Substrate contacts are provided by residues 70 to 72 (VEL) and 89 to 90 (QE).

It belongs to the GTP cyclohydrolase I family. QueF type 1 subfamily.

Its subcellular location is the cytoplasm. It carries out the reaction 7-aminomethyl-7-carbaguanine + 2 NADP(+) = 7-cyano-7-deazaguanine + 2 NADPH + 3 H(+). It participates in tRNA modification; tRNA-queuosine biosynthesis. Functionally, catalyzes the NADPH-dependent reduction of 7-cyano-7-deazaguanine (preQ0) to 7-aminomethyl-7-deazaguanine (preQ1). This chain is NADPH-dependent 7-cyano-7-deazaguanine reductase, found in Caldicellulosiruptor bescii (strain ATCC BAA-1888 / DSM 6725 / KCTC 15123 / Z-1320) (Anaerocellum thermophilum).